The primary structure comprises 320 residues: MAGLAARLVLLAGAAALASGSQGDREPVYRDCVLQCEEQNCSGGALNHFRSRQPIYMSLAGWTCRDDCKYECMWVTVGLYLQEGHKVPQFHGKWPFSRFLFFQEPASAVASFLNGLASLVMLCRYRTFVPASSPMYHTCVAFAWVSLNAWFWSTVFHTRDTDLTEKMDYFCASTVILHSIYLCCVRTVGLQHPAVVSAFRALLLLMLTVHVSYLSLIRFDYGYNLVANVAIGLVNVVWWLAWCLWNQRRLPHVRKCVVVVLLLQGLSLLELLDFPPLFWVLDAHAIWHISTIPVHVLFFSFLEDDSLYLLKESEDKFKLD.

The first 20 residues, 1–20 (MAGLAARLVLLAGAAALASG), serve as a signal peptide directing secretion. Residues 21 to 98 (SQGDREPVYR…QFHGKWPFSR (78 aa)) are Lumenal-facing. N40 carries an N-linked (GlcNAc...) asparagine glycan. Residues 99 to 119 (FLFFQEPASAVASFLNGLASL) form a helical membrane-spanning segment. The Cytoplasmic segment spans residues 120 to 135 (VMLCRYRTFVPASSPM). The helical transmembrane segment at 136–156 (YHTCVAFAWVSLNAWFWSTVF) threads the bilayer. Residues 157-169 (HTRDTDLTEKMDY) lie on the Lumenal side of the membrane. A helical transmembrane segment spans residues 170-190 (FCASTVILHSIYLCCVRTVGL). Over 191–193 (QHP) the chain is Cytoplasmic. Residues 194-214 (AVVSAFRALLLLMLTVHVSYL) traverse the membrane as a helical segment. At 215–224 (SLIRFDYGYN) the chain is on the lumenal side. A helical transmembrane segment spans residues 225-245 (LVANVAIGLVNVVWWLAWCLW). Topologically, residues 246-257 (NQRRLPHVRKCV) are cytoplasmic. A helical membrane pass occupies residues 258-278 (VVVLLLQGLSLLELLDFPPLF). W279 is a topological domain (lumenal). A helical membrane pass occupies residues 280–299 (VLDAHAIWHISTIPVHVLFF). Residues 300 to 320 (SFLEDDSLYLLKESEDKFKLD) lie on the Cytoplasmic side of the membrane.

The protein belongs to the PGAP3 family. Ubiquitously expressed, with highest levels in thyroid and placenta.

It is found in the golgi apparatus membrane. Its function is as follows. Involved in the fatty acid remodeling steps of GPI-anchor maturation where the unsaturated acyl chain at sn-2 of inositol phosphate is replaced by a saturated stearoyl chain. May catalyze the first step of the fatty acid remodeling, by removing the unsaturated acyl chain at sn-2 of inositol phosphate, generating a lyso-GPI intermediate. The fatty acid remodeling steps is critical for the integration of GPI-APs into lipid rafts. The protein is GPI-specific phospholipase A2-like PGAP3 of Homo sapiens (Human).